The primary structure comprises 353 residues: MDVLRRTIERIGPLDQAAMRAARERQDDLTKPRGSLGRLEDLGVLVSGITGQVKTRLDRKTVFVIAADHGVAEEGTSLYPQEVTTQMMFNFERGGAGINVLARQVGARVVVVDVGTKSDTGGVGNLISKKIAAGSKNMAVGPAMSRAEAVAAVQAGIEVLEAELPRGVDIAATGDMGIGNTTPSSAICSVLTGKPVEEVTGRGTGLDDAGLAKKCAVIRRALAVNRPDPADPLDVLAKVGGFEIGALAGVILAAAAHRIPIVIDGFVSGAAALIAVGLAPQVRDYMIAGHLSAEPGHAVLLAHLGLDPLLCLGMRLGEGTGACLGMSLVAAAAAIQAEMATFQDAGVSQAKND.

Glu318 functions as the Proton acceptor in the catalytic mechanism.

It belongs to the CobT family.

It carries out the reaction 5,6-dimethylbenzimidazole + nicotinate beta-D-ribonucleotide = alpha-ribazole 5'-phosphate + nicotinate + H(+). It functions in the pathway nucleoside biosynthesis; alpha-ribazole biosynthesis; alpha-ribazole from 5,6-dimethylbenzimidazole: step 1/2. Its function is as follows. Catalyzes the synthesis of alpha-ribazole-5'-phosphate from nicotinate mononucleotide (NAMN) and 5,6-dimethylbenzimidazole (DMB). This is Nicotinate-nucleotide--dimethylbenzimidazole phosphoribosyltransferase from Desulforudis audaxviator (strain MP104C).